A 557-amino-acid chain; its full sequence is 2-succinyl-5-enolpyruvyl-6-hydroxy-3-cyclohexene-1-carboxylate synthase (557 aa).

Belongs to the TPP enzyme family. MenD subfamily. In terms of assembly, homodimer. The cofactor is Mg(2+). It depends on Mn(2+) as a cofactor. Requires thiamine diphosphate as cofactor.

It catalyses the reaction isochorismate + 2-oxoglutarate + H(+) = 5-enolpyruvoyl-6-hydroxy-2-succinyl-cyclohex-3-ene-1-carboxylate + CO2. The protein operates within quinol/quinone metabolism; 1,4-dihydroxy-2-naphthoate biosynthesis; 1,4-dihydroxy-2-naphthoate from chorismate: step 2/7. It functions in the pathway quinol/quinone metabolism; menaquinone biosynthesis. In terms of biological role, catalyzes the thiamine diphosphate-dependent decarboxylation of 2-oxoglutarate and the subsequent addition of the resulting succinic semialdehyde-thiamine pyrophosphate anion to isochorismate to yield 2-succinyl-5-enolpyruvyl-6-hydroxy-3-cyclohexene-1-carboxylate (SEPHCHC). The protein is 2-succinyl-5-enolpyruvyl-6-hydroxy-3-cyclohexene-1-carboxylate synthase of Staphylococcus aureus (strain MRSA252).